Consider the following 99-residue polypeptide: Integration host factor subunit alpha (99 aa).

This sequence belongs to the bacterial histone-like protein family. In terms of assembly, heterodimer of an alpha and a beta chain.

This protein is one of the two subunits of integration host factor, a specific DNA-binding protein that functions in genetic recombination as well as in transcriptional and translational control. The chain is Integration host factor subunit alpha from Enterobacter sp. (strain 638).